A 407-amino-acid chain; its full sequence is Deacetylase Atu3266 (407 aa).

H75, H77, K173, H206, H229, and D289 together coordinate Zn(2+). An N6-carboxylysine modification is found at K173.

The protein belongs to the metallo-dependent hydrolases superfamily. Atu3266/EF_0837 deacetylase family. In terms of assembly, homohexamer, dimer of trimers. Zn(2+) serves as cofactor.

Functionally, esterase that catalyzes the deacetylation of acetyl-(R)-mandelate (in vitro). Can also hydrolyze acetyl glycolate, but with lower efficiency. Has very low N-acetyl-D-amino acid deacetylase activity with N-acetyl-D-serine and N-acetyl-D-threonine (in vitro). Theoretical substrate docking studies suggest that other N-acetylated amino acids may optimally occupy the active site and may in fact be the physiological substrates. The polypeptide is Deacetylase Atu3266 (Agrobacterium fabrum (strain C58 / ATCC 33970) (Agrobacterium tumefaciens (strain C58))).